Reading from the N-terminus, the 691-residue chain is MSHSRRLSLEPAIDSITGRFRDLQRNDDDVNKPDFRELDLGSPVSTLMPRGSASSSAAATPTSSSGSSGSASGKPSVSSQMAKRLDDAYKSHSGELSSPGSGMPTTTRILKPGHRRSSSTGTPLIFSGSSFTSATSHTSPQGGGSGATSAVSPNTGVLPAGNICPSGRILKTGMASRTSSRTETLCTGTGNYGHGNVVRSGGGGGTSGKAVRVAENGENPEELKRMGNDMYRRGSFSEALSLYDRAILISPGNAAYRSNRAAALTALRRLGEAVKECLEAVRIDPSYSRAHQRLASLYLRLGEAENARRHICFSGQCPDQADLQRLQTLEKHLRRCWEARKIGDWKTAIKETDAAIANGADSSPQLVACKAEAFLRLKQIEDSDFCVSCIPRLDHHYHSQPQVKLFGMVVEAYVLCIQAQVDMALGRFENAVVKAERAAMLDQTNPEVVSVLNNVKMVVRARTRGNELFSSGRFSEACVAYGDGLKQDDSNSVLYCNRAACWYKLGLWEKSVEDCNHALKSQPSYIKALLRRAASYGKLGRWEDAVKDYEFLRRELPGDSEVAESLERAKTVLMNRSQESKSLGFNNEVEAVSTLDKFKKSVALPGVSVFHFKSSSNRQCEEISPFINTLCLRYPLVHFFMVDVEESMALAKAESIRKVPTFKMYKNGDKVKEMVCPSHQFLEDSIKHFLL.

Disordered stretches follow at residues 1–153 (MSHS…AVSP) and 174–209 (MASR…TSGK). Ser-8 is modified (phosphoserine). Positions 19–39 (RFRDLQRNDDDVNKPDFRELD) are enriched in basic and acidic residues. Phosphoserine is present on residues Ser-42 and Ser-45. A compositionally biased stretch (low complexity) spans 51–79 (GSASSSAAATPTSSSGSSGSASGKPSVSS). Basic and acidic residues predominate over residues 83–93 (KRLDDAYKSHS). Polar residues-rich tracts occupy residues 94-108 (GELS…TTTR), 118-140 (SSTG…HTSP), and 175-189 (ASRT…CTGT). TPR repeat units lie at residues 220 to 253 (PEEL…SPGN), 255 to 287 (AYRS…DPSY), 289 to 321 (RAHQ…PDQA), 327 to 362 (QTLE…GADS), 412 to 445 (AYVL…DQTN), 458 to 491 (VVRA…DDSN), 492 to 525 (SVLY…QPSY), and 527 to 559 (KALL…LPGD). Residues 596–683 (DKFKKSVALP…MVCPSHQFLE (88 aa)) form the Thioredoxin domain.

In terms of assembly, interacts with BRL2. Expressed in embryos and organ primordia in shoot and root. In primary and cauline leaves and petals, is expressed in hydathodes, guard cells, petiole cells and cells associated with differentiating vascular bundles.

In terms of biological role, involved in osmotic and salt stress tolerance. May play a role in the control of meristematic cell size during osmotic stress. May function as an adapter protein for BRL2 and may be required for signaling affecting leaf vascular tissue pattern formation. The polypeptide is Inactive TPR repeat-containing thioredoxin TTL3 (Arabidopsis thaliana (Mouse-ear cress)).